An 830-amino-acid chain; its full sequence is DNA gyrase subunit A (830 aa).

The region spanning 34–514 is the Topo IIA-type catalytic domain; it reads LPDVRDGLKP…NHSDINMEDL (481 aa). Tyrosine 122 (O-(5'-phospho-DNA)-tyrosine intermediate) is an active-site residue. The GyrA-box signature appears at 541–547; that stretch reads QRRGGKG.

It belongs to the type II topoisomerase GyrA/ParC subunit family. In terms of assembly, heterotetramer, composed of two GyrA and two GyrB chains. In the heterotetramer, GyrA contains the active site tyrosine that forms a transient covalent intermediate with DNA, while GyrB binds cofactors and catalyzes ATP hydrolysis.

It localises to the cytoplasm. It catalyses the reaction ATP-dependent breakage, passage and rejoining of double-stranded DNA.. A type II topoisomerase that negatively supercoils closed circular double-stranded (ds) DNA in an ATP-dependent manner to modulate DNA topology and maintain chromosomes in an underwound state. Negative supercoiling favors strand separation, and DNA replication, transcription, recombination and repair, all of which involve strand separation. Also able to catalyze the interconversion of other topological isomers of dsDNA rings, including catenanes and knotted rings. Type II topoisomerases break and join 2 DNA strands simultaneously in an ATP-dependent manner. The chain is DNA gyrase subunit A from Buchnera aphidicola subsp. Acyrthosiphon pisum (strain APS) (Acyrthosiphon pisum symbiotic bacterium).